We begin with the raw amino-acid sequence, 1231 residues long: MIAAPEIPTDFNLLQESETHFSSDTDFEDIEGKNQKQGKGKTCKKGKKGPAEKGKSGNGGGKPPSGSNRMNGHHQQNGVENMMLFEVVKMGKSAMQSVVDDWIESYKHDRDIALLDLINFFIQCSGCKGVVTAEMFRHMQNSEIIRKMTEEFDEDSGDYPLTMAGPQWKKFKSSFCEFIGVLVRQCQYSIIYDEYMMDTVISLLTGLSDSQVRAFRHTSTLAAMKLMTALVNVALNLSINMDNTQRQYEAERNKMIGKRANERLELLLQKRKELQENQDEIENMMNAIFKGVFVHRYRDAIAEIRAICIEEIGIWMKMYSDAFLNDSYLKYVGWTMHDKQGEVRLKCLTALQGLYYNKELNSKLELFTSRFKDRIVSMTLDKEYDVAVQAIKLLTLVLQSSEEVLTAEDCENVYHLVYSAHRPVAVAAGEFLYKKLFSRRDPEEDGLMKRRGRQGPNANLVKTLVFFFLESELHEHAAYLVDSMWDCATELLKDWECMNSLLLEEPLSGEEALTDRQESALIEIMLCTIRQAAECHPPVGRGTGKRVLTAKEKKTQLDDRTRITELFAVALPQLLAKYSVDAEKVTNLLQLPQYFDLEIYTTGRLEKHLDALLRQIRNIVEKHTDTDVLEACSKTYHALCNEEFTIFNRVDISRSQLIDELADKFNRLLEDFLQEGEEPDEDDAYQVLSTLKRITAFHNAHDLSKWDLFACNYKLLKTGIENGDMPEQIVIHALQCAHYVILWQLAKITESTSTKEDLLRLKKQMRVFCQICQHYLTNVNTTVKEQAFTILCDILMIFSHQIMSGGRDMLEPLVYTPDSSLQSELLSFILDHVFIEQDDDSNSADGQQEDEASKIEALHKRRNLLAAFCKLIVYTVVEMNTAADIFKQYMKYYNDYGDIIKETMSKTRQIDKIQCAKTLILSLQQLFNEMIQENGYNFDRSSSTFSGIKELARRFALTFGLDQLKTREAIAMLHKDGIEFAFKEPNPQGESHPPLNLAFLDILSEFSSKLLRQDKRTVYVYLEKFMTFQMSLRREDVWLPLMSYRNSLLAGGDDDTMSVISGMSSRGSTVRSKKSKPSTGKRKVVEGMQLALPEESSSSDSMWLSREQTLHTPVMMQTPQLTSTIMREPKRLRPEDSFMSVYPMQAEHHQTPLDYNRRGTSLMEDDEEPIVEDVMMSSEGRIEDLNEGMDFDTMDIDLPPSKNRRERTELKPDFFDPASIMDESVLGVSMF.

Residue Met1 is modified to N-acetylmethionine. The disordered stretch occupies residues Met1 to Gln75. A compositionally biased stretch (basic residues) spans Lys36 to Lys48. One can recognise an SCD domain in the interval Phe293–Met378. Position 607 is an N6-acetyllysine (Lys607). Residues Ser1058, Ser1061, Ser1064, and Ser1065 each carry the phosphoserine modification. The tract at residues Gly1062 to Gly1087 is disordered. Over residues Arg1071 to Arg1082 the composition is skewed to basic residues. Thr1112 carries the post-translational modification Phosphothreonine. A phosphoserine mark is found at Ser1177 and Ser1178.

The protein belongs to the SCC3 family. In terms of assembly, interacts directly with RAD21 in cohesin complex. Cohesin complexes are composed of a heterodimer between a SMC1 protein (SMC1A or SMC1B) and SMC3, which are attached via their hinge domain, and RAD21 which link them at their heads, and one STAG protein (STAG1, STAG2 or STAG3). In cohesin complexes, STAG2 is mutually exclusive with STAG1 and STAG3. In terms of processing, phosphorylated by PLK1. The large dissociation of cohesin from chromosome arms during prophase is partly due to its phosphorylation.

The protein resides in the nucleus. It is found in the chromosome. It localises to the centromere. Functionally, component of cohesin complex, a complex required for the cohesion of sister chromatids after DNA replication. The cohesin complex apparently forms a large proteinaceous ring within which sister chromatids can be trapped. At anaphase, the complex is cleaved and dissociates from chromatin, allowing sister chromatids to segregate. The cohesin complex may also play a role in spindle pole assembly during mitosis. The chain is Cohesin subunit SA-2 (Stag2) from Mus musculus (Mouse).